A 225-amino-acid chain; its full sequence is UPF0173 metal-dependent hydrolase Tneu_1348 (225 aa).

It belongs to the UPF0173 family.

This chain is UPF0173 metal-dependent hydrolase Tneu_1348, found in Pyrobaculum neutrophilum (strain DSM 2338 / JCM 9278 / NBRC 100436 / V24Sta) (Thermoproteus neutrophilus).